The sequence spans 129 residues: DNA-directed RNA polymerase subunit omega (129 aa).

The disordered stretch occupies residues 77–98; the sequence is VDEPESEVVPALSSAPQNPEAI.

It belongs to the RNA polymerase subunit omega family. In terms of assembly, the RNAP catalytic core consists of 2 alpha, 1 beta, 1 beta' and 1 omega subunit. When a sigma factor is associated with the core the holoenzyme is formed, which can initiate transcription.

The catalysed reaction is RNA(n) + a ribonucleoside 5'-triphosphate = RNA(n+1) + diphosphate. In terms of biological role, promotes RNA polymerase assembly. Latches the N- and C-terminal regions of the beta' subunit thereby facilitating its interaction with the beta and alpha subunits. This chain is DNA-directed RNA polymerase subunit omega, found in Methylocella silvestris (strain DSM 15510 / CIP 108128 / LMG 27833 / NCIMB 13906 / BL2).